Consider the following 547-residue polypeptide: Fimbria adhesin EcpD (547 aa).

The first 20 residues, 1–20, serve as a signal peptide directing secretion; the sequence is MRVNLLIAMIIFALIWPATA.

This sequence belongs to the EcpD/MatE family. As to quaternary structure, forms polymers. Interacts with EcpA.

The protein localises to the fimbrium. In terms of biological role, part of the ecpRABCDE operon, which encodes the E.coli common pilus (ECP). ECP is found in both commensal and pathogenic strains and plays a dual role in early-stage biofilm development and host cell recognition. Tip pilus adhesin, which is required for assembly of EcpA into fibers. The protein is Fimbria adhesin EcpD (ecpD) of Escherichia coli O18:K1:H7 (strain IHE3034 / ExPEC).